A 684-amino-acid polypeptide reads, in one-letter code: Probable metal-nicotianamine transporter YSL9 (684 aa).

Over residues 1–10 the composition is skewed to basic residues; that stretch reads MKQERRRKRQ. The tract at residues 1–55 is disordered; the sequence is MKQERRRKRQPGPPRLELVVAHPREEEMAGLDGGGDAEEGATHARGGGGAPPPWR. The next 14 membrane-spanning stretches (helical) occupy residues 58–78, 82–102, 130–150, 174–194, 234–254, 295–315, 341–361, 402–422, 430–450, 462–482, 515–535, 568–588, 612–632, and 642–662; these read LTAR…VIVM, LTTG…FVVL, CAVA…LLGL, GIAW…LALV, VNGF…QWFY, LVNL…WPLI, FICV…IVAL, LAFS…PMMF, VVIA…GAGL, IALF…AGLV, IIAQ…TFFL, FSAL…FAVA, VPFL…LIVF, and AALM…LWIF.

The protein belongs to the YSL (TC 2.A.67.2) family.

It is found in the membrane. May be involved in the transport of nicotianamine-chelated metals. In Oryza sativa subsp. japonica (Rice), this protein is Probable metal-nicotianamine transporter YSL9 (YSL9).